Reading from the N-terminus, the 626-residue chain is Chaperone protein HtpG (626 aa).

Residues 1–339 (MSQNQETRGF…SNDLPLNVSR (339 aa)) form an a; substrate-binding region. The tract at residues 340 to 555 (EILQDNKITA…NDQMTTQMAK (216 aa)) is b. Positions 556–626 (LFAAAGQPVP…FIKRINKLLG (71 aa)) are c.

It belongs to the heat shock protein 90 family. As to quaternary structure, homodimer.

The protein localises to the cytoplasm. In terms of biological role, molecular chaperone. Has ATPase activity. The chain is Chaperone protein HtpG from Haemophilus influenzae (strain PittGG).